A 364-amino-acid polypeptide reads, in one-letter code: Chorismate synthase (364 aa).

R48 contributes to the NADP(+) binding site. FMN-binding positions include 131–133 (RSS), 243–244 (NA), G288, 303–307 (KPTSS), and R329.

The protein belongs to the chorismate synthase family. In terms of assembly, homotetramer. FMNH2 serves as cofactor.

It catalyses the reaction 5-O-(1-carboxyvinyl)-3-phosphoshikimate = chorismate + phosphate. The protein operates within metabolic intermediate biosynthesis; chorismate biosynthesis; chorismate from D-erythrose 4-phosphate and phosphoenolpyruvate: step 7/7. In terms of biological role, catalyzes the anti-1,4-elimination of the C-3 phosphate and the C-6 proR hydrogen from 5-enolpyruvylshikimate-3-phosphate (EPSP) to yield chorismate, which is the branch point compound that serves as the starting substrate for the three terminal pathways of aromatic amino acid biosynthesis. This reaction introduces a second double bond into the aromatic ring system. The protein is Chorismate synthase of Brucella anthropi (strain ATCC 49188 / DSM 6882 / CCUG 24695 / JCM 21032 / LMG 3331 / NBRC 15819 / NCTC 12168 / Alc 37) (Ochrobactrum anthropi).